The following is a 345-amino-acid chain: Platelet-derived growth factor C (345 aa).

Positions 1 to 22 are cleaved as a signal peptide; sequence MSLFGLLLLTSALAGQRQGTQA. N-linked (GlcNAc...) asparagine glycans are attached at residues asparagine 25 and asparagine 55. The CUB domain occupies 46–163; it reads HERIITVSTN…PGFCIHYNIV (118 aa). Cystine bridges form between cysteine 104-cysteine 124, cysteine 250-cysteine 294, cysteine 280-cysteine 335, and cysteine 287-cysteine 337.

Belongs to the PDGF/VEGF growth factor family. In terms of assembly, homodimer; disulfide-linked. Interacts with PDGFRA homodimers, and with heterodimers formed by PDGFRA and PDGFRB. Interacts (via CUB domain) with PLAT (via kringle domain). In terms of processing, proteolytic removal of the N-terminal CUB domain releasing the core domain is necessary for unmasking the receptor-binding epitopes of the core domain. Cleavage after basic residues in the hinge region (region connecting the CUB and growth factor domains) gives rise to the receptor-binding form. Cleaved by PLAT and PLG. Post-translationally, sumoylated with SUMO1. N-glycosylated. In terms of tissue distribution, expressed in the fallopian tube, vascular smooth muscle cells in kidney, breast and colon and in visceral smooth muscle of the gastrointestinal tract. Highly expressed in retinal pigment epithelia. Expressed in medulloblastoma. In the kidney, constitutively expressed in parietal epithelial cells of Bowman's capsule, tubular epithelial cells and in arterial endothelial cells (at protein level). Highly expressed in the platelets, prostate, testis and uterus. Higher expression is observed in uterine leiomyomata. Weaker expression in the spleen, thymus, heart, pancreas, liver, ovary cells and small intestine, and negligible expression in the colon and peripheral blood leukocytes.

It is found in the cytoplasm. It localises to the cytosol. Its subcellular location is the secreted. The protein localises to the nucleus. The protein resides in the cytoplasmic granule. It is found in the cell membrane. In terms of biological role, growth factor that plays an essential role in the regulation of embryonic development, cell proliferation, cell migration, survival and chemotaxis. Potent mitogen and chemoattractant for cells of mesenchymal origin. Required for normal skeleton formation during embryonic development, especially for normal development of the craniofacial skeleton and for normal development of the palate. Required for normal skin morphogenesis during embryonic development. Plays an important role in wound healing, where it appears to be involved in three stages: inflammation, proliferation and remodeling. Plays an important role in angiogenesis and blood vessel development. Involved in fibrotic processes, in which transformation of interstitial fibroblasts into myofibroblasts plus collagen deposition occurs. The CUB domain has mitogenic activity in coronary artery smooth muscle cells, suggesting a role beyond the maintenance of the latency of the PDGF domain. In the nucleus, PDGFC seems to have additional function. The chain is Platelet-derived growth factor C (PDGFC) from Homo sapiens (Human).